Here is a 95-residue protein sequence, read N- to C-terminus: Putative pterin-4-alpha-carbinolamine dehydratase (95 aa).

This sequence belongs to the pterin-4-alpha-carbinolamine dehydratase family.

It catalyses the reaction (4aS,6R)-4a-hydroxy-L-erythro-5,6,7,8-tetrahydrobiopterin = (6R)-L-erythro-6,7-dihydrobiopterin + H2O. This Thermosynechococcus vestitus (strain NIES-2133 / IAM M-273 / BP-1) protein is Putative pterin-4-alpha-carbinolamine dehydratase.